Consider the following 380-residue polypeptide: Actinidain (380 aa).

The first 24 residues, methionine 1–alanine 24, serve as a signal peptide directing secretion. A propeptide spans phenylalanine 25 to valine 126 (activation peptide). 3 cysteine pairs are disulfide-bonded: cysteine 148–cysteine 191, cysteine 182–cysteine 224, and cysteine 282–cysteine 332. The active site involves cysteine 151. Cysteine 151 is an E64 binding site. Catalysis depends on residues histidine 288 and asparagine 308.

The protein belongs to the peptidase C1 family. Fruit.

The catalysed reaction is Specificity close to that of papain.. Its activity is regulated as follows. Repressed by the active-site-directed cysteine protease inhibitor E64 (L-trans-epoxysuccinyl-leucylamide-(4-guanido)-butane) produced by Aspergillus japonicus. In terms of biological role, cysteine protease responsible for the cleavage of kiwellin into kissper and KiTH. This chain is Actinidain, found in Actinidia chinensis var. chinensis (Chinese soft-hair kiwi).